Consider the following 441-residue polypeptide: tRNA (guanine(37)-N(1))-methyltransferase (441 aa).

A mitochondrion-targeting transit peptide spans 1 to 9; the sequence is MFAPPAARA. Residues Arg-221, 248–249, 276–277, and Asn-331 contribute to the S-adenosyl-L-methionine site; these read DL and DG.

The protein belongs to the class I-like SAM-binding methyltransferase superfamily. TRM5/TYW2 family. As to quaternary structure, monomer.

It is found in the mitochondrion matrix. It localises to the nucleus. The protein resides in the cytoplasm. It carries out the reaction guanosine(37) in tRNA + S-adenosyl-L-methionine = N(1)-methylguanosine(37) in tRNA + S-adenosyl-L-homocysteine + H(+). Its function is as follows. Specifically methylates the N1 position of guanosine-37 in various cytoplasmic and mitochondrial tRNAs. Methylation is not dependent on the nature of the nucleoside 5' of the target nucleoside. This is the first step in the biosynthesis of wybutosine (yW), a modified base adjacent to the anticodon of tRNAs and required for accurate decoding. The chain is tRNA (guanine(37)-N(1))-methyltransferase from Phaeosphaeria nodorum (strain SN15 / ATCC MYA-4574 / FGSC 10173) (Glume blotch fungus).